A 320-amino-acid chain; its full sequence is Probable serine proteinase inhibitor 1 (320 aa).

Belongs to the serpin family. Poxviruses subfamily.

The polypeptide is Probable serine proteinase inhibitor 1 (SPI-1) (Swinepox virus (strain Kasza) (SWPV)).